The primary structure comprises 407 residues: Phosphopentomutase (407 aa).

Mn(2+) is bound by residues D10, D306, H311, D347, H348, and H359.

Belongs to the phosphopentomutase family. Mn(2+) serves as cofactor.

The protein resides in the cytoplasm. The enzyme catalyses 2-deoxy-alpha-D-ribose 1-phosphate = 2-deoxy-D-ribose 5-phosphate. It catalyses the reaction alpha-D-ribose 1-phosphate = D-ribose 5-phosphate. Its pathway is carbohydrate degradation; 2-deoxy-D-ribose 1-phosphate degradation; D-glyceraldehyde 3-phosphate and acetaldehyde from 2-deoxy-alpha-D-ribose 1-phosphate: step 1/2. Functionally, isomerase that catalyzes the conversion of deoxy-ribose 1-phosphate (dRib-1-P) and ribose 1-phosphate (Rib-1-P) to deoxy-ribose 5-phosphate (dRib-5-P) and ribose 5-phosphate (Rib-5-P), respectively. In Buchnera aphidicola subsp. Acyrthosiphon pisum (strain APS) (Acyrthosiphon pisum symbiotic bacterium), this protein is Phosphopentomutase.